The primary structure comprises 164 residues: Transcription factor MafF (164 aa).

The interval 51 to 76 (RLKQRRRTLKNRGYAASCRVKRVCQK) is basic motif. The 64-residue stretch at 51–114 (RLKQRRRTLK…DALRGKCEAL (64 aa)) folds into the bZIP domain. The interval 79–93 (LQKQKSELEREVDKL) is leucine-zipper. The disordered stretch occupies residues 141–164 (KSTPGSGSGPAHGPDPAHGPASCS). The segment covering 149-164 (GPAHGPDPAHGPASCS) has biased composition (low complexity).

It belongs to the bZIP family. Maf subfamily. In terms of assembly, monomer and homo- or heterodimer. Interacts with MIP. Forms high affinity heterodimers with members of the CNC-bZIP family such as NFE2L1/NRF1. Expressed in the term myometrium and kidney.

The protein localises to the nucleus. Its function is as follows. Since they lack a putative transactivation domain, the small Mafs behave as transcriptional repressors when they dimerize among themselves. However, they seem to serve as transcriptional activators by dimerizing with other (usually larger) basic-zipper proteins, such as NFE2L1/NRF1, and recruiting them to specific DNA-binding sites. Interacts with the upstream promoter region of the oxytocin receptor gene. May be a transcriptional enhancer in the up-regulation of the oxytocin receptor gene at parturition. This chain is Transcription factor MafF (MAFF), found in Homo sapiens (Human).